The sequence spans 430 residues: Histidine--tRNA ligase (430 aa).

The protein belongs to the class-II aminoacyl-tRNA synthetase family. As to quaternary structure, homodimer.

The protein localises to the cytoplasm. It catalyses the reaction tRNA(His) + L-histidine + ATP = L-histidyl-tRNA(His) + AMP + diphosphate + H(+). In Acaryochloris marina (strain MBIC 11017), this protein is Histidine--tRNA ligase.